The sequence spans 274 residues: Large ribosomal subunit protein uL2 (274 aa).

The disordered stretch occupies residues 223 to 265; that stretch reads VVMNPVDHPHGGGEGRTSGGRHPVSPWGMPTKGFKTRKNKRTD. The segment covering 256–265 has biased composition (basic residues); sequence FKTRKNKRTD.

This sequence belongs to the universal ribosomal protein uL2 family. As to quaternary structure, part of the 50S ribosomal subunit. Forms a bridge to the 30S subunit in the 70S ribosome.

One of the primary rRNA binding proteins. Required for association of the 30S and 50S subunits to form the 70S ribosome, for tRNA binding and peptide bond formation. It has been suggested to have peptidyltransferase activity; this is somewhat controversial. Makes several contacts with the 16S rRNA in the 70S ribosome. This is Large ribosomal subunit protein uL2 from Vibrio parahaemolyticus serotype O3:K6 (strain RIMD 2210633).